The chain runs to 479 residues: Bifunctional protein HldE (479 aa).

Residues 1-322 (MLAETQLAPI…AALERTAAQI (322 aa)) form a ribokinase region. 198–201 (NRRE) is an ATP binding site. Asp-267 is an active-site residue. Positions 350–479 (FTNGCFDLVH…TSSLVAKART (130 aa)) are cytidylyltransferase.

This sequence in the N-terminal section; belongs to the carbohydrate kinase PfkB family. It in the C-terminal section; belongs to the cytidylyltransferase family. Homodimer.

The catalysed reaction is D-glycero-beta-D-manno-heptose 7-phosphate + ATP = D-glycero-beta-D-manno-heptose 1,7-bisphosphate + ADP + H(+). The enzyme catalyses D-glycero-beta-D-manno-heptose 1-phosphate + ATP + H(+) = ADP-D-glycero-beta-D-manno-heptose + diphosphate. Its pathway is nucleotide-sugar biosynthesis; ADP-L-glycero-beta-D-manno-heptose biosynthesis; ADP-L-glycero-beta-D-manno-heptose from D-glycero-beta-D-manno-heptose 7-phosphate: step 1/4. It participates in nucleotide-sugar biosynthesis; ADP-L-glycero-beta-D-manno-heptose biosynthesis; ADP-L-glycero-beta-D-manno-heptose from D-glycero-beta-D-manno-heptose 7-phosphate: step 3/4. Catalyzes the phosphorylation of D-glycero-D-manno-heptose 7-phosphate at the C-1 position to selectively form D-glycero-beta-D-manno-heptose-1,7-bisphosphate. In terms of biological role, catalyzes the ADP transfer from ATP to D-glycero-beta-D-manno-heptose 1-phosphate, yielding ADP-D-glycero-beta-D-manno-heptose. In Azorhizobium caulinodans (strain ATCC 43989 / DSM 5975 / JCM 20966 / LMG 6465 / NBRC 14845 / NCIMB 13405 / ORS 571), this protein is Bifunctional protein HldE.